A 658-amino-acid chain; its full sequence is Structure-specific endonuclease subunit SLX4 (658 aa).

Disordered regions lie at residues 17-37, 74-123, and 327-383; these read VDSD…IPGD, GATE…KSIT, and QPGV…QVLQ. 2 stretches are compositionally biased toward low complexity: residues 75-90 and 99-108; these read ATES…PPAK and KAAGRTSTGT. The segment covering 365-374 has biased composition (polar residues); the sequence is FPKSPTSTPE.

It belongs to the SLX4 family. As to quaternary structure, forms a heterodimer with SLX1. Phosphorylated in response to DNA damage.

The protein localises to the nucleus. In terms of biological role, regulatory subunit of the SLX1-SLX4 structure-specific endonuclease that resolves DNA secondary structures generated during DNA repair and recombination. Has endonuclease activity towards branched DNA substrates, introducing single-strand cuts in duplex DNA close to junctions with ss-DNA. In Lachancea thermotolerans (strain ATCC 56472 / CBS 6340 / NRRL Y-8284) (Yeast), this protein is Structure-specific endonuclease subunit SLX4.